A 586-amino-acid polypeptide reads, in one-letter code: Anaerobic glycerol-3-phosphate dehydrogenase subunit A1 (586 aa).

6–34 (SVLVIGGGSTGTGIARDLAMRGLDVTLVE) serves as a coordination point for FAD. The tract at residues 559–586 (GGAVADGGRERAADRADDDALGGADGDN) is disordered. A compositionally biased stretch (acidic residues) spans 574–586 (ADDDALGGADGDN).

The protein belongs to the FAD-dependent glycerol-3-phosphate dehydrogenase family. Composed of a catalytic GlpA/B dimer and of membrane bound GlpC. FAD is required as a cofactor. The cofactor is FMN.

Its subcellular location is the cell membrane. It catalyses the reaction a quinone + sn-glycerol 3-phosphate = dihydroxyacetone phosphate + a quinol. The protein operates within polyol metabolism; glycerol degradation via glycerol kinase pathway; glycerone phosphate from sn-glycerol 3-phosphate (anaerobic route): step 1/1. Up-regulated by glycerol and no inhibition by glucose. In terms of biological role, conversion of glycerol 3-phosphate to dihydroxyacetone phosphate. Required for growth on glycerol and for glycerol metabolism. The chain is Anaerobic glycerol-3-phosphate dehydrogenase subunit A1 (gpdA1) from Haloferax volcanii (strain ATCC 29605 / DSM 3757 / JCM 8879 / NBRC 14742 / NCIMB 2012 / VKM B-1768 / DS2) (Halobacterium volcanii).